Here is a 498-residue protein sequence, read N- to C-terminus: ATP synthase subunit beta, chloroplastic (498 aa).

172-179 provides a ligand contact to ATP; sequence GGAGVGKT.

This sequence belongs to the ATPase alpha/beta chains family. As to quaternary structure, F-type ATPases have 2 components, CF(1) - the catalytic core - and CF(0) - the membrane proton channel. CF(1) has five subunits: alpha(3), beta(3), gamma(1), delta(1), epsilon(1). CF(0) has four main subunits: a(1), b(1), b'(1) and c(9-12).

It localises to the plastid. It is found in the chloroplast thylakoid membrane. The catalysed reaction is ATP + H2O + 4 H(+)(in) = ADP + phosphate + 5 H(+)(out). Its function is as follows. Produces ATP from ADP in the presence of a proton gradient across the membrane. The catalytic sites are hosted primarily by the beta subunits. This chain is ATP synthase subunit beta, chloroplastic, found in Spinacia oleracea (Spinach).